The primary structure comprises 304 residues: Uricase (304 aa).

Residue Ala-2 is modified to N-acetylalanine. Lys-10 and Lys-23 each carry N6-acetyllysine; alternate. An N6-succinyllysine; alternate mark is found at Lys-10 and Lys-23. Lys-23 acts as the Charge relay system in catalysis. 2 positions are modified to N6-acetyllysine: Lys-27 and Lys-36. Residues Ser-39 and Ser-63 each carry the phosphoserine modification. Thr-68 acts as the Charge relay system in catalysis. Thr-68 and Asp-69 together coordinate urate. Residues Lys-118, Lys-122, and Lys-164 each carry the N6-acetyllysine modification. Phe-170 is a binding site for urate. N6-acetyllysine is present on residues Lys-175 and Lys-185. Residue Arg-187 coordinates urate. An N6-acetyllysine; alternate mark is found at Lys-221 and Lys-228. N6-succinyllysine; alternate occurs at positions 221 and 228. Residue Ser-232 is modified to Phosphoserine. Urate contacts are provided by Val-235, Gln-236, and Asn-262. The Charge relay system role is filled by His-264. Position 278 is an N6-acetyllysine (Lys-278). Tyr-289 carries the post-translational modification Phosphotyrosine. Residues 302 to 304 (SKL) carry the Microbody targeting signal motif.

This sequence belongs to the uricase family.

It localises to the peroxisome. The enzyme catalyses urate + O2 + H2O = 5-hydroxyisourate + H2O2. Its pathway is purine metabolism; urate degradation; (S)-allantoin from urate: step 1/3. Its function is as follows. Catalyzes the oxidation of uric acid to 5-hydroxyisourate, which is further processed to form (S)-allantoin. This chain is Uricase (UOX), found in Canis lupus familiaris (Dog).